The sequence spans 843 residues: Protein translocase subunit SecA 1 (843 aa).

ATP is bound by residues glutamine 91, 109 to 113, and aspartate 498; that span reads GEGKT. Residues 799 to 813 show a composition bias toward basic and acidic residues; it reads EAKHVSAEDGKEKVK. Residues 799–826 form a disordered region; sequence EAKHVSAEDGKEKVKPKPIVKGDQVGRN. Zn(2+)-binding residues include cysteine 829, cysteine 831, cysteine 840, and histidine 841.

This sequence belongs to the SecA family. Monomer and homodimer. Part of the essential Sec protein translocation apparatus which comprises SecA, SecYEG and auxiliary proteins SecDF. Other proteins may also be involved. Zn(2+) serves as cofactor.

Its subcellular location is the cell membrane. The protein resides in the cytoplasm. It carries out the reaction ATP + H2O + cellular proteinSide 1 = ADP + phosphate + cellular proteinSide 2.. Functionally, part of the Sec protein translocase complex. Interacts with the SecYEG preprotein conducting channel. Has a central role in coupling the hydrolysis of ATP to the transfer of proteins into and across the cell membrane, serving as an ATP-driven molecular motor driving the stepwise translocation of polypeptide chains across the membrane. This is Protein translocase subunit SecA 1 from Staphylococcus aureus (strain N315).